Here is a 300-residue protein sequence, read N- to C-terminus: UDP-N-acetylenolpyruvoylglucosamine reductase (300 aa).

The region spanning arginine 30 to aspartate 194 is the FAD-binding PCMH-type domain. Residue arginine 174 is part of the active site. Serine 223 serves as the catalytic Proton donor. The active site involves glutamate 293.

The protein belongs to the MurB family. FAD is required as a cofactor.

The protein resides in the cytoplasm. It carries out the reaction UDP-N-acetyl-alpha-D-muramate + NADP(+) = UDP-N-acetyl-3-O-(1-carboxyvinyl)-alpha-D-glucosamine + NADPH + H(+). It functions in the pathway cell wall biogenesis; peptidoglycan biosynthesis. Functionally, cell wall formation. This is UDP-N-acetylenolpyruvoylglucosamine reductase from Geobacter sulfurreducens (strain ATCC 51573 / DSM 12127 / PCA).